We begin with the raw amino-acid sequence, 89 residues long: Protein S100-A6 (89 aa).

EF-hand domains lie at 12 to 47 (LVAI…IGSK) and 48 to 83 (LQDA…LALI). 2 residues coordinate Ca(2+): Thr-28 and Glu-33. An N6-acetyllysine modification is found at Lys-40. Residue Ser-46 is modified to Phosphoserine. Lys-47 is modified (N6-acetyllysine; alternate). Lys-47 bears the N6-succinyllysine; alternate mark. 5 residues coordinate Ca(2+): Asp-61, Asn-63, Asp-65, Glu-67, and Glu-72.

Belongs to the S-100 family. In terms of assembly, homodimer; head to tail assembly of 2 subunits. Interacts with CACYBP in a calcium-dependent manner. Interacts with ANXA2 and ANXA11 (via N-terminus). Interacts with SUGT1. Interacts with TP53; has higher affinity for TP53 that is phosphorylated on its N-terminal domain, and lower affinity for TP53 that is phosphorylated on its C-terminal domain. Interacts with tropomyosin. Interacts with FKBP4. Interacts with PPP5C (via TPR repeats); the interaction is calcium-dependent and modulates PPP5C activity. Interacts with TPPP; this interaction inhibits TPPP dimerization.

Its subcellular location is the nucleus envelope. It localises to the cytoplasm. The protein localises to the cell membrane. Functionally, may function as calcium sensor and modulator, contributing to cellular calcium signaling. May function by interacting with other proteins, such as TPR-containing proteins, and indirectly play a role in many physiological processes such as the reorganization of the actin cytoskeleton and in cell motility. Binds 2 calcium ions. Calcium binding is cooperative. The polypeptide is Protein S100-A6 (S100a6) (Mus musculus (Mouse)).